The primary structure comprises 307 residues: Phosphonates import ATP-binding protein PhnC (307 aa).

Residues 4-252 (IRIERLSKTF…RLHALYGDDA (249 aa)) form the ABC transporter domain. 37 to 44 (GASGSGKS) is an ATP binding site. Residues 265–275 (AAREAAGEPAR) show a composition bias toward basic and acidic residues. The tract at residues 265 to 307 (AAREAAGEPARRAPAAFDSAGSPDLPDSQPASPRRMLAASSMR) is disordered.

The protein belongs to the ABC transporter superfamily. Phosphonates importer (TC 3.A.1.9.1) family. As to quaternary structure, the complex is composed of two ATP-binding proteins (PhnC), two transmembrane proteins (PhnE) and a solute-binding protein (PhnD).

It localises to the cell inner membrane. The catalysed reaction is phosphonate(out) + ATP + H2O = phosphonate(in) + ADP + phosphate + H(+). Part of the ABC transporter complex PhnCDE involved in phosphonates import. Responsible for energy coupling to the transport system. The protein is Phosphonates import ATP-binding protein PhnC of Burkholderia pseudomallei (strain 1710b).